The primary structure comprises 294 residues: Protein PET54 (294 aa).

Its subcellular location is the mitochondrion inner membrane. Functionally, activator of specific mitochondrial mRNAs. PET54 is involved in the excision of intron aI5-beta from pre-mRNA for cytochrome c oxidase I (COX1) and plays a role in promoting the translation of COX3. The polypeptide is Protein PET54 (PET54) (Saccharomyces bayanus (Yeast)).